Reading from the N-terminus, the 252-residue chain is Trans-aconitate 2-methyltransferase (252 aa).

Belongs to the methyltransferase superfamily. Tam family.

The protein localises to the cytoplasm. It catalyses the reaction trans-aconitate + S-adenosyl-L-methionine = (E)-3-(methoxycarbonyl)pent-2-enedioate + S-adenosyl-L-homocysteine. Catalyzes the S-adenosylmethionine monomethyl esterification of trans-aconitate. This Enterobacter sp. (strain 638) protein is Trans-aconitate 2-methyltransferase.